The sequence spans 338 residues: N-acetylmuramate/N-acetylglucosamine kinase (338 aa).

It belongs to the kinase AmgK family.

The catalysed reaction is N-acetyl-D-muramate + ATP = N-acetyl-alpha-D-muramate 1-phosphate + ADP + H(+). It carries out the reaction N-acetyl-D-glucosamine + ATP = N-acetyl-alpha-D-glucosamine 1-phosphate + ADP + H(+). The protein operates within cell wall biogenesis; peptidoglycan recycling. Functionally, sugar kinase that catalyzes the ATP-dependent phosphorylation of N-acetylmuramate (MurNAc) and N-acetylglucosamine (GlcNAc) at its C1 hydroxyl group, leading to MurNAc alpha-1P and GlcNAc alpha-1P, respectively. Is involved in peptidoglycan recycling as part of a cell wall recycling pathway that bypasses de novo biosynthesis of the peptidoglycan precursor UDP-MurNAc. Plays a role in intrinsic resistance to fosfomycin, which targets the de novo synthesis of UDP-MurNAc. This is N-acetylmuramate/N-acetylglucosamine kinase from Pseudomonas aeruginosa (strain ATCC 15692 / DSM 22644 / CIP 104116 / JCM 14847 / LMG 12228 / 1C / PRS 101 / PAO1).